A 239-amino-acid chain; its full sequence is MIINAKGPASFAEKYIVRSIWENKFPPGSILPAERELSELIGVTRTTLREVLQRLARDGWLTIQHGKPTRVNNFWETSGLNILETIAELNPDGFPELVDQLLSARSSVSAIYFRGAIRNSPDEAVVALANINELEDTAQAYADFDYALQHTLAFSSGNPLYVLILNGFKGLYSRVGRYYFSSAEARALAMDFYKQLQQLAIDKNYTDVPALMRTYGINSGVMWQSLRDDMPVELGHSDT.

Residues 6-74 (KGPASFAEKY…HGKPTRVNNF (69 aa)) form the HTH gntR-type domain. The segment at residues 34-53 (ERELSELIGVTRTTLREVLQ) is a DNA-binding region (H-T-H motif).

As to quaternary structure, homodimer.

Its subcellular location is the cytoplasm. Functionally, multifunctional regulator of fatty acid metabolism. The protein is Fatty acid metabolism regulator protein of Shewanella halifaxensis (strain HAW-EB4).